The sequence spans 449 residues: Biotin carboxylase (449 aa).

The Biotin carboxylation domain occupies 1-445 (MLDKIVIANR…NIHYLEKKLG (445 aa)). Residues Lys-116, Lys-159, 165–166 (GG), 201–204 (EKYL), His-209, and His-236 contribute to the ATP site. The 198-residue stretch at 120 to 317 (IAAMKKAGVP…LIKEQLRIAA (198 aa)) folds into the ATP-grasp domain. Residue Lys-238 coordinates hydrogencarbonate. Positions 276 and 288 each coordinate ATP. Residues Glu-276, Glu-288, and Asn-290 each coordinate Mg(2+). Positions 276, 288, and 290 each coordinate Mn(2+). 3 residues coordinate hydrogencarbonate: Arg-292, Val-295, and Arg-338. Residue Arg-292 is part of the active site. Arg-338 lines the biotin pocket.

In terms of assembly, acetyl-CoA carboxylase is a heterohexamer of biotin carboxyl carrier protein, biotin carboxylase and the two subunits of carboxyl transferase in a 2:2 complex. It depends on Mg(2+) as a cofactor. Mn(2+) is required as a cofactor.

It carries out the reaction N(6)-biotinyl-L-lysyl-[protein] + hydrogencarbonate + ATP = N(6)-carboxybiotinyl-L-lysyl-[protein] + ADP + phosphate + H(+). It participates in lipid metabolism; malonyl-CoA biosynthesis; malonyl-CoA from acetyl-CoA: step 1/1. Functionally, this protein is a component of the acetyl coenzyme A carboxylase complex; first, biotin carboxylase catalyzes the carboxylation of the carrier protein and then the transcarboxylase transfers the carboxyl group to form malonyl-CoA. The sequence is that of Biotin carboxylase (accC) from Escherichia coli (strain K12).